The sequence spans 161 residues: MSNSSKKHLDLPYRPGVGMMILNADNHIFVGKRIDTKISAWQMPQGGIVPGETPSIAAMREMLEEIGSDKGYIIAESKCWYSYDVPSFLIPKLWNGNFRGQKQRWFLIRFTGNNEDININTSNPEFDQWRWASLDELLSIIIPFKRKLYQAVVKEFESLIQ.

In terms of domain architecture, Nudix hydrolase spans 12-154; the sequence is PYRPGVGMMI…KRKLYQAVVK (143 aa). The Nudix box signature appears at 46 to 67; sequence GGIVPGETPSIAAMREMLEEIG.

It belongs to the Nudix hydrolase family. RppH subfamily. A divalent metal cation is required as a cofactor.

Accelerates the degradation of transcripts by removing pyrophosphate from the 5'-end of triphosphorylated RNA, leading to a more labile monophosphorylated state that can stimulate subsequent ribonuclease cleavage. The protein is RNA pyrophosphohydrolase of Rickettsia rickettsii (strain Iowa).